Here is a 986-residue protein sequence, read N- to C-terminus: Translation initiation factor IF-2 (986 aa).

A disordered region spans residues 47–388 (SAPAQTPHKE…RSKGRKGKYE (342 aa)). Residues 53-64 (PHKEVSQEEVRV) show a composition bias toward basic and acidic residues. The segment covering 78–94 (PEAASAEAASAPAAQEE) has biased composition (low complexity). Residues 95–113 (APQKAEPEKVEAEKAEAPK) show a composition bias toward basic and acidic residues. Composition is skewed to low complexity over residues 127 to 141 (EAAP…PAEA) and 153 to 214 (APVA…QAPA). Composition is skewed to basic and acidic residues over residues 215–225 (KAEEQEPEKAT) and 268–278 (GVERPGTERPA). Positions 286-300 (PAGAPGRPGERPTTG) are enriched in low complexity. A compositionally biased stretch (basic and acidic residues) spans 358–374 (GKKDSFKDILDKRERVF). Residues 486–653 (KRPPVVTIMG…MVLLQADVLE (168 aa)) form the tr-type G domain. Residues 495–502 (GHVDHGKT) are G1. 495-502 (GHVDHGKT) provides a ligand contact to GTP. The tract at residues 520–524 (GITQH) is G2. Residues 541 to 544 (DTPG) form a G3 region. Residues 541 to 545 (DTPGH) and 595 to 598 (NKID) contribute to the GTP site. A G4 region spans residues 595–598 (NKID). The tract at residues 631–633 (SAK) is G5.

It belongs to the TRAFAC class translation factor GTPase superfamily. Classic translation factor GTPase family. IF-2 subfamily.

The protein localises to the cytoplasm. In terms of biological role, one of the essential components for the initiation of protein synthesis. Protects formylmethionyl-tRNA from spontaneous hydrolysis and promotes its binding to the 30S ribosomal subunits. Also involved in the hydrolysis of GTP during the formation of the 70S ribosomal complex. In Citrifermentans bemidjiense (strain ATCC BAA-1014 / DSM 16622 / JCM 12645 / Bem) (Geobacter bemidjiensis), this protein is Translation initiation factor IF-2.